Reading from the N-terminus, the 120-residue chain is Large ribosomal subunit protein uL22 (120 aa).

The protein belongs to the universal ribosomal protein uL22 family. In terms of assembly, part of the 50S ribosomal subunit.

This protein binds specifically to 23S rRNA; its binding is stimulated by other ribosomal proteins, e.g. L4, L17, and L20. It is important during the early stages of 50S assembly. It makes multiple contacts with different domains of the 23S rRNA in the assembled 50S subunit and ribosome. Functionally, the globular domain of the protein is located near the polypeptide exit tunnel on the outside of the subunit, while an extended beta-hairpin is found that lines the wall of the exit tunnel in the center of the 70S ribosome. This is Large ribosomal subunit protein uL22 from Corynebacterium efficiens (strain DSM 44549 / YS-314 / AJ 12310 / JCM 11189 / NBRC 100395).